A 414-amino-acid chain; its full sequence is ORC1-type DNA replication protein 1 (414 aa).

ATP is bound by residues 70–74 (TGKTA), tyrosine 213, and arginine 225.

Belongs to the CDC6/cdc18 family.

Involved in regulation of DNA replication. This is ORC1-type DNA replication protein 1 (cdc6-1) from Methanosarcina acetivorans (strain ATCC 35395 / DSM 2834 / JCM 12185 / C2A).